A 71-amino-acid polypeptide reads, in one-letter code: Ranatuerin-2Va (71 aa).

The first 22 residues, 1–22 (MFTLKKSFLLLFFLGTITLSLC), serve as a signal peptide directing secretion. Residues 23–43 (EQERGADEDDGVEMTEEEVKR) constitute a propeptide that is removed on maturation. An intrachain disulfide couples Cys-66 to Cys-71.

Expressed by the skin glands.

It is found in the secreted. Antimicrobial peptide. The sequence is that of Ranatuerin-2Va from Odorrana versabilis (Chinese bamboo leaf odorous frog).